The sequence spans 746 residues: Tudor domain-containing protein krimp (746 aa).

Residues 1 to 310 (MNLEDISMIM…RDIYNQILKD (310 aa)) form an involved in homooligomerization region. The non-canonical tudor domain stretch occupies residues 311–489 (MAAFPENTIV…PAGITEDDMA (179 aa)). The C3H1-type zinc-finger motif lies at 511-540 (KDEQRICRHYDPKLNGCFKGNNCRFAHEPF). The Tudor domain maps to 613–670 (KPRLLDIVLALYSDGCFYRAQIIDEFPSEYMIFYVDYGNTEFVPLSCLAPCENVDSFK).

This sequence belongs to the Tudor domain containing protein family. In terms of assembly, homooligomerizes (via N-terminus). Component of the ping-pong piRNA processing (4P) complex consisting of krimp, aub and AGO3; a single molecule of krimp can bind both aub and AGO3 without the need for homooligomerization. Interacts (via canonical tudor domain) with aub (via N-terminus when symmetrically dimethylated on arginine residues). Interacts (via non-canonical tudor domain) with AGO3 (via N-terminus when unmethylated on arginine residues); this interaction leads to symmetrical dimethylation on AGO3 arginine residues and its subsequent dissociation from krimp. Krimp associated AGO3 is mostly free of piRNA binding and the interaction plays an important role in the loading of AGO3 with piRNAs; piRNA binding stimulates methylation of ACO3 by the csul/PRMT5 methylosome complex and promotes dissociation of the two proteins. In terms of tissue distribution, widely expressed in female germline cells, including differentiating germ cells in germarium and egg chambers (at protein level).

Its subcellular location is the cytoplasm. The protein localises to the perinuclear region. The protein resides in the cytoplasmic ribonucleoprotein granule. In terms of biological role, stable structural component of the perinuclear meiotic nuage, a germline-specific subcellular membraneless ribonucleoprotein compartment involved in production of transposable element-repressing Piwi-interacting RNA (piRNA)-induced silencing complexes (piRISCs), which are essential for maintaining germline integrity during oogenesis. Scaffold component of the ping-pong piRNA processing (4P) complex that recruits the Piwi proteins aub and AGO3 to specific subregions of the nuage where it coordinates their activity in the ping-pong amplification step of secondary piRNA biogenesis. Binds methylated aub, which is associated with piRNA, and unmethylated AGO3, which is not associated with piRNA, bringing the Piwi proteins into close proximity and facilitating the loading of freshly cut piRNAs generated by aub onto AGO3. Promotes asymmetric ping-pong amplification by aub and AGO3 to bias production towards antisense piRNAs capable of silencing transposable elements. Required for symmetrical dimethylation of AGO3, probably by recruitment to the nuage where methylosome components are located; dimethylation promotes AGO3 dissociation and interaction with other tudor-domain containing proteins such as tud. Required for the recruitment of mael to the perinuclear meiotic nuage. Required for the recruitment of aub to the nuage in testes but not in ovaries. Involved in repression of long interspersed nuclear elements (LINEs) including HeT-A, I-element LINEs and possibly mst40, but not TART LINEs. The sequence is that of Tudor domain-containing protein krimp from Drosophila melanogaster (Fruit fly).